The sequence spans 269 residues: MLKEQLIAEAQKIDASVALDSIFESVNISPEAKETFGTVFEATVKQHAVKLAESHIAKIAEKAEEEVEKNKEEAEEKAEKKIAEQASKFIDHLAKEWLAENKLAVDKGIKAELFESMLGGLKELFVEHNVVVPEESVDVVAEMEEELQEHKEESPRLFEELNMRDAYINYVQREVALSESTKDLTESQKEKVSALVEGMDYSDAFSSKLSAIVEMVKKSNKDESTITESINTPDTEAAGLNFVTEAVEDKAAQGAEDIVSVYAKVASRF.

Belongs to the T4likevirus capsid assembly scaffolding protein family.

Its subcellular location is the virion. Its function is as follows. Scaffolding protein involved in the icosahedric procapsid assembly. Coassembles with the capsid proteins to form the procapsid, in which the scaffolding protein is found within the external shell of icosahedrally arranged capsid protein subunits. In a subsequent step the scaffolding protein molecules are cleaved by the viral protease and released, except for the internal peptide VII. Cleavage product of Gp22 that is incorporated into the mature phage head. The polypeptide is Capsid assembly scaffolding protein (22) (Enterobacteria phage T4 (Bacteriophage T4)).